The chain runs to 335 residues: Methylthioribose-1-phosphate isomerase (335 aa).

Substrate contacts are provided by residues 47 to 49 (RGA), R81, and Q184. Catalysis depends on D225, which acts as the Proton donor. 235–236 (NK) is a substrate binding site.

The protein belongs to the eIF-2B alpha/beta/delta subunits family. MtnA subfamily.

It carries out the reaction 5-(methylsulfanyl)-alpha-D-ribose 1-phosphate = 5-(methylsulfanyl)-D-ribulose 1-phosphate. Its pathway is amino-acid biosynthesis; L-methionine biosynthesis via salvage pathway; L-methionine from S-methyl-5-thio-alpha-D-ribose 1-phosphate: step 1/6. In terms of biological role, catalyzes the interconversion of methylthioribose-1-phosphate (MTR-1-P) into methylthioribulose-1-phosphate (MTRu-1-P). The sequence is that of Methylthioribose-1-phosphate isomerase from Synechococcus sp. (strain CC9902).